Consider the following 386-residue polypeptide: Succinate--CoA ligase [ADP-forming] subunit beta (386 aa).

The 235-residue stretch at K9–E243 folds into the ATP-grasp domain. ATP is bound by residues K45, G52 to G54, E98, V101, and E106. Mg(2+) contacts are provided by N198 and D212. Residues N263 and G320–L322 each bind substrate.

The protein belongs to the succinate/malate CoA ligase beta subunit family. Heterotetramer of two alpha and two beta subunits. It depends on Mg(2+) as a cofactor.

The catalysed reaction is succinate + ATP + CoA = succinyl-CoA + ADP + phosphate. It catalyses the reaction GTP + succinate + CoA = succinyl-CoA + GDP + phosphate. Its pathway is carbohydrate metabolism; tricarboxylic acid cycle; succinate from succinyl-CoA (ligase route): step 1/1. In terms of biological role, succinyl-CoA synthetase functions in the citric acid cycle (TCA), coupling the hydrolysis of succinyl-CoA to the synthesis of either ATP or GTP and thus represents the only step of substrate-level phosphorylation in the TCA. The beta subunit provides nucleotide specificity of the enzyme and binds the substrate succinate, while the binding sites for coenzyme A and phosphate are found in the alpha subunit. The chain is Succinate--CoA ligase [ADP-forming] subunit beta from Desulfotalea psychrophila (strain LSv54 / DSM 12343).